We begin with the raw amino-acid sequence, 121 residues long: Homeobox protein HD-6 (121 aa).

Residues 28 to 87 (PKRSRIQLHDWQSMLLEHSFRMNPYPDRIEKYNLFLKTKIPMKNVKIWFQNRRAREKSFY) constitute a DNA-binding region (homeobox).

Its subcellular location is the nucleus. The chain is Homeobox protein HD-6 (HD-6) from Encephalitozoon cuniculi (strain GB-M1) (Microsporidian parasite).